A 107-amino-acid chain; its full sequence is Integration host factor (107 aa).

Residues 1-20 (MALPPLTPEQRAAALEKAAA) form a disordered region. The span at 9-18 (EQRAAALEKA) shows a compositional bias: low complexity. Lys54 is a DNA binding site. Positions 64-71 (LPGVGKVR) match the H2TH motif, binds DNA motif. DNA-binding residues include Ser82, Arg85, Arg88, Ser92, Asn93, and Gln94. Residues 82-94 (SESRRVRGLGSNQ) form a lid, binds DNA region.

This sequence belongs to the actinobacterial IHF (aIHF) family. As to quaternary structure, monomer.

The protein localises to the cytoplasm. It localises to the spore. It is found in the nucleoid. In terms of biological role, a nucleoid-associated protein (NAP) that probably plays a role in chromosome compactation. Contributes to development and secondary metabolism, but is dispensable for growth and viability. Binds to the promoter region of a number of genes (including itself); multiple molecules of the protein bind to the DNA simultaneously, deletion alters the expression of about 30 genes (both up- and down-regulation occurs). Plays a role in controlling viability. Binds dsDNA without any obvious sequence specificity, in a concentration and length-dependent manner. Promotes supercoiling in a topoisomerase-dependent manner (counteracts TopA plasmid relaxation). Binds DNA as a monomer, contacting 8 base pairs via the phosphate backbone; each monomer can bind 2 DNA duplexes, allowing a bridging function. Alters DNA topology, constraining negative supercoils, possibly by DNA twist. Longer dsDNA binds more than one sIHF subunit. This is Integration host factor from Streptomyces coelicolor (strain ATCC BAA-471 / A3(2) / M145).